The sequence spans 274 residues: Penicillin-insensitive murein endopeptidase (274 aa).

A signal peptide spans 1–19 (MNKTAIALLALLASSASLA). Intrachain disulfides connect Cys44–Cys265, Cys187–Cys235, and Cys216–Cys223. The Zn(2+) site is built by His110, His113, Asp120, Asp147, His150, and His211. Positions 227–274 (PLPPPGDGCGAELQSWFEPPKPGTTKPEKKTPPPLPPSCQALLDEHVI) are disordered.

This sequence belongs to the peptidase M74 family. As to quaternary structure, dimer. It depends on Zn(2+) as a cofactor.

It is found in the periplasm. Its function is as follows. Murein endopeptidase that cleaves the D-alanyl-meso-2,6-diamino-pimelyl amide bond that connects peptidoglycan strands. Likely plays a role in the removal of murein from the sacculus. This is Penicillin-insensitive murein endopeptidase from Escherichia coli (strain SE11).